The chain runs to 100 residues: Small ribosomal subunit protein uS14c (100 aa).

This sequence belongs to the universal ribosomal protein uS14 family. As to quaternary structure, part of the 30S ribosomal subunit.

It is found in the plastid. The protein localises to the chloroplast. In terms of biological role, binds 16S rRNA, required for the assembly of 30S particles. The polypeptide is Small ribosomal subunit protein uS14c (Vitis vinifera (Grape)).